Reading from the N-terminus, the 360-residue chain is MKPHALIGLLAGMLLSSSLYAADSTKPLPLHIGGRVLVESPANQPVSYTYSWPAVYFETAFKGQSLTLKFDDDQNIFRLIVDDKAPVVINKPGKVDYPVESLAPGKHRVRLEKLTETQSTSGRFLGFYTDPSAKPLALPKRKRQIEFIGDSFTVGYGNTSPSRECTDEELFKTTNSQMAFGPLTAKAFDADYQINASSGFGIVRNYNGTSPDKSLLSLYPYTLNNPDQLYHNKHWKPQVIVIGLGTNDFSTALNDNERWKTREALHADYVANYVKFVKQLHSNNARAQFILMNSDQSNGEIAEQVGKVVAQLKGGGLHQVEQIVFKGLDYSGCHWHPSANDDQLLANLLITHLQQKKGIW.

The first 21 residues, 1-21, serve as a signal peptide directing secretion; sequence MKPHALIGLLAGMLLSSSLYA. Ser151 serves as the catalytic Nucleophile.

Belongs to the carbohydrate esterase 2 (CE2) family.

It is found in the secreted. The enzyme catalyses Deacetylation of xylans and xylo-oligosaccharides.. Its pathway is glycan degradation; xylan degradation. Its function is as follows. Involved in the degradation of plant cell wall polysaccharides. Catalyzes the deacetylation of acetylated birchwood xylan and glucomannan, with a large preference for the latter, and of the synthetic substrate 4-nitrophenyl acetate (4-NPAc). In Cellvibrio japonicus (strain Ueda107) (Pseudomonas fluorescens subsp. cellulosa), this protein is Acetylxylan esterase / glucomannan deacetylase.